Here is a 623-residue protein sequence, read N- to C-terminus: Protein EDS1 (623 aa).

Position 2 is an N-acetylalanine (A2). The active-site Nucleophile is the S123. Residues D187 and H317 each act as charge relay system in the active site. Positions 358 to 383 (VQAALEEEKKRVENQKKIIQVIEQER) form a coiled coil.

In terms of assembly, homodimer. Interacts with RPS4, RPS6, SNC1, SRFR1, AvrRps4 and HopA1. Part of a nuclear complex made of EDS1, PAD4 and SAG101, that can be redirected to the cytoplasm in the presence of an extranuclear form of EDS1. Interacts (via N-terminus) with PAD4 (via N-terminus). Interacts (via N-terminus) with SAG101. EDS1-SAG101 and EDS1-PAD4 form separate complexes in pathogen-unchallenged cells. Part of a nuclear protein complex made of VICTR, PAD4 and EDS1. Interacts with VICTR.

The protein resides in the nucleus. It is found in the cytoplasm. The protein localises to the microsome. Functionally, positive regulator of basal resistance and of effector-triggered immunity specifically mediated by TIR-NB-LRR (TNL) resistance proteins. Disruption by bacterial effector of EDS1-TIR-NB-LRR resistance protein interactions constitutes the first step in resistance activation. Acts redundantly with salicylic acid to regulate resistance gene-mediated signaling. Triggers early plant defenses and hypersensitive response independently of PAD4, and then recruits PAD4 to potentiate plant defenses through the accumulation of salicylic acid. Nuclear localization is essential for basal and TNL-conditioned immunity and for reprogramming defense gene expression, while cytoplasmic EDS1 is required to induce a complete immune response. Heterodimerization with PAD4 and/or SGA101 is necessary for TNL-mediated effector-triggered immunity. Contributes to nonhost resistance against E.amylovora. Loss of EDS1-PAD4 interaction compromises basal but not TNL-triggered resistance. Necessary for systemic acquired resistance (SAR) signal generation and perception. Has no direct lipase activity. Putative lipase activity is dispensable for immune functions. This is Protein EDS1 from Arabidopsis thaliana (Mouse-ear cress).